Consider the following 826-residue polypeptide: DEAD-box ATP-dependent RNA helicase 13 (826 aa).

The span at 1-10 (MVTGDKESSL) shows a compositional bias: basic and acidic residues. Disordered regions lie at residues 1–62 (MVTG…QLDG) and 76–175 (HLTL…GDDT). Basic residues predominate over residues 11–22 (MKKRNKRSHKRK). The segment covering 49-58 (SFSTLFSGSG) has biased composition (polar residues). Acidic residues predominate over residues 94–128 (EDDDDTNETVDEMIEGEEAEEDGEGRDDEDDEDDE). A coiled-coil region spans residues 125-166 (EDDEETRKKKEKKAKRNKEKKKEKKKKKQKKINEAAKNQDAS). The span at 133 to 154 (KKEKKAKRNKEKKKEKKKKKQK) shows a compositional bias: basic residues. Residues 190 to 218 (SAWSSMRLHPLLMKSIYRLDFKEPTKIQK) carry the Q motif motif. Positions 222-439 (NVAAYQGKDV…KLKRGSSKSK (218 aa)) constitute a Helicase ATP-binding domain. Position 235-242 (235-242 (AETGSGKT)) interacts with ATP. The DEAD box signature appears at 363–366 (DEAD). One can recognise a Helicase C-terminal domain in the interval 476-644 (KIEESFIKCE…YMPAVRKRLY (169 aa)). Coiled coils occupy residues 666–712 (LKKH…TLLS) and 783–810 (KMKGQSAEKRRDIASLKKKRKEEKIGRR). The segment at 783-826 (KMKGQSAEKRRDIASLKKKRKEEKIGRRDQRRNQKKQRKLMASS) is disordered. 2 stretches are compositionally biased toward basic and acidic residues: residues 788 to 797 (SAEKRRDIAS) and 804 to 814 (EEKIGRRDQRR). The segment covering 815-826 (NQKKQRKLMASS) has biased composition (basic residues).

The protein belongs to the DEAD box helicase family. DDX24/MAK5 subfamily.

The catalysed reaction is ATP + H2O = ADP + phosphate + H(+). The polypeptide is DEAD-box ATP-dependent RNA helicase 13 (RH13) (Arabidopsis thaliana (Mouse-ear cress)).